Here is a 521-residue protein sequence, read N- to C-terminus: Cyclic AMP-responsive element-binding protein 3-like protein 2 (521 aa).

Residues 1–378 (MEVLESGEQS…CKLAGTQTGT (378 aa)) are Cytoplasmic-facing. The span at 83–103 (YSLSEEPRTQSPFTHAATSDS) shows a compositional bias: polar residues. Residues 83-106 (YSLSEEPRTQSPFTHAATSDSFND) are disordered. Position 93 is a phosphoserine (serine 93). Residue lysine 178 forms a Glycyl lysine isopeptide (Lys-Gly) (interchain with G-Cter in SUMO2) linkage. Serine 191 is modified (phosphoserine). The segment at 196–264 (SVDQLHLPPT…PHKLQGSGPL (69 aa)) is disordered. The span at 208–220 (SSHSSDSEGSLSP) shows a compositional bias: low complexity. The bZIP domain maps to 294–357 (ALKKIRRKIK…RTLLQQLQKL (64 aa)). Positions 296 to 325 (KKIRRKIKNKISAQESRRKKKEYMDSLEKK) are basic motif. A leucine-zipper region spans residues 336-357 (LRKKVEVLENTNRTLLQQLQKL). A helical; Signal-anchor for type II membrane protein transmembrane segment spans residues 379–399 (CLMVVVLCFAVAFGSFFQGYG). Topologically, residues 400–521 (PYPSATKMAL…ELERRVNATF (122 aa)) are lumenal. The short motif at 427–430 (RNLL) is the S1P recognition element. N-linked (GlcNAc...) asparagine glycosylation is found at asparagine 481, asparagine 505, and asparagine 518.

It belongs to the bZIP family. ATF subfamily. Binds DNA as a dimer. In terms of processing, upon ER stress, translocated to the Golgi apparatus, where it is processed by regulated intramembrane proteolysis (RIP) to release the cytosol-facing N-terminal transcription factor domain. The cleavage is performed sequentially by site-1 and site-2 proteases (S1P/MBTPS1 and S2P/MBTPS2). Post-translationally, N-glycosylated. Ubiquitinated by HRD1/SYVN1; undergoes 'Lys-48'-linked ubiquitination, followed by rapid proteasomal degradation under normal conditions. Upon ER stress, SYVN1 E3 ubiquitin-protein ligase dissociates from its substrate, ubiquitination does not occur and CREB3L2 is stabilized. In terms of tissue distribution, widely expressed, including in lung, bladder, ovary, testis and spleen. Highly expressed in chondrocytes.

The protein localises to the endoplasmic reticulum membrane. The protein resides in the nucleus. Functionally, transcription factor involved in unfolded protein response (UPR). In the absence of endoplasmic reticulum (ER) stress, inserted into ER membranes, with N-terminal DNA-binding and transcription activation domains oriented toward the cytosolic face of the membrane. In response to ER stress, transported to the Golgi, where it is cleaved in a site-specific manner by resident proteases S1P/MBTPS1 and S2P/MBTPS2. The released N-terminal cytosolic domain is translocated to the nucleus to effect transcription of specific target genes. Plays a critical role in chondrogenesis by activating the transcription of SEC23A, which promotes the transport and secretion of cartilage matrix proteins, and possibly that of ER biogenesis-related genes. In a neuroblastoma cell line, protects cells from ER stress-induced death. In vitro activates transcription of target genes via direct binding to the CRE site. The sequence is that of Cyclic AMP-responsive element-binding protein 3-like protein 2 (Creb3l2) from Mus musculus (Mouse).